Reading from the N-terminus, the 462-residue chain is UDP-N-acetylmuramoylalanine--D-glutamate ligase (462 aa).

ATP is bound at residue 117-123 (GTNGKTT).

Belongs to the MurCDEF family.

Its subcellular location is the cytoplasm. It carries out the reaction UDP-N-acetyl-alpha-D-muramoyl-L-alanine + D-glutamate + ATP = UDP-N-acetyl-alpha-D-muramoyl-L-alanyl-D-glutamate + ADP + phosphate + H(+). The protein operates within cell wall biogenesis; peptidoglycan biosynthesis. In terms of biological role, cell wall formation. Catalyzes the addition of glutamate to the nucleotide precursor UDP-N-acetylmuramoyl-L-alanine (UMA). This is UDP-N-acetylmuramoylalanine--D-glutamate ligase from Synechococcus sp. (strain CC9902).